Here is a 430-residue protein sequence, read N- to C-terminus: Adenylosuccinate synthetase (430 aa).

GTP is bound by residues 12-18 (GDEGKGK) and 40-42 (GHT). The active-site Proton acceptor is the D13. Positions 13 and 40 each coordinate Mg(2+). Residues 13–16 (DEGK), 38–41 (NAGH), T130, R144, Q224, T239, and R303 contribute to the IMP site. The Proton donor role is filled by H41. Residue 299-305 (VNTGRKR) coordinates substrate. GTP contacts are provided by residues R305, 331-333 (KLD), and 413-415 (STS).

Belongs to the adenylosuccinate synthetase family. As to quaternary structure, homodimer. It depends on Mg(2+) as a cofactor.

It is found in the cytoplasm. It catalyses the reaction IMP + L-aspartate + GTP = N(6)-(1,2-dicarboxyethyl)-AMP + GDP + phosphate + 2 H(+). It functions in the pathway purine metabolism; AMP biosynthesis via de novo pathway; AMP from IMP: step 1/2. Plays an important role in the de novo pathway of purine nucleotide biosynthesis. Catalyzes the first committed step in the biosynthesis of AMP from IMP. This chain is Adenylosuccinate synthetase, found in Rhodopseudomonas palustris (strain BisB18).